Here is a 176-residue protein sequence, read N- to C-terminus: Beta-carotene hydroxylase (176 aa).

Residues 10 to 126 enclose the Fatty acid hydroxylase domain; it reads LSVIAMEGIA…AHRLHHAVRG (117 aa). The tract at residues 152–176 is disordered; sequence HGRPPKRDAAKDRPDAASPSSSSPE. The segment covering 156–166 has biased composition (basic and acidic residues); it reads PKRDAAKDRPD. Positions 167–176 are enriched in low complexity; it reads AASPSSSSPE.

It belongs to the sterol desaturase family.

The protein operates within carotenoid biosynthesis; zeaxanthin biosynthesis. Its function is as follows. Catalyzes the hydroxylation reaction from beta-carotene to zeaxanthin. This Pseudescherichia vulneris (Escherichia vulneris) protein is Beta-carotene hydroxylase (crtZ).